The following is a 631-amino-acid chain: Phosphomethylpyrimidine synthase (631 aa).

Substrate is bound by residues Asn-239, Met-268, Tyr-297, His-333, 353 to 355, 394 to 397, and Glu-433; these read SRG and DGLR. His-437 lines the Zn(2+) pocket. Tyr-460 provides a ligand contact to substrate. His-501 contributes to the Zn(2+) binding site. Residues Cys-581, Cys-584, and Cys-589 each contribute to the [4Fe-4S] cluster site.

It belongs to the ThiC family. In terms of assembly, homodimer. [4Fe-4S] cluster is required as a cofactor.

It catalyses the reaction 5-amino-1-(5-phospho-beta-D-ribosyl)imidazole + S-adenosyl-L-methionine = 4-amino-2-methyl-5-(phosphooxymethyl)pyrimidine + CO + 5'-deoxyadenosine + formate + L-methionine + 3 H(+). It functions in the pathway cofactor biosynthesis; thiamine diphosphate biosynthesis. In terms of biological role, catalyzes the synthesis of the hydroxymethylpyrimidine phosphate (HMP-P) moiety of thiamine from aminoimidazole ribotide (AIR) in a radical S-adenosyl-L-methionine (SAM)-dependent reaction. This chain is Phosphomethylpyrimidine synthase, found in Salmonella paratyphi C (strain RKS4594).